A 142-amino-acid polypeptide reads, in one-letter code: Transcriptional regulator MraZ (142 aa).

2 SpoVT-AbrB domains span residues 5-47 (EYQH…TINE) and 76-119 (ACIV…SREK).

The protein belongs to the MraZ family. As to quaternary structure, forms oligomers.

Its subcellular location is the cytoplasm. The protein localises to the nucleoid. This is Transcriptional regulator MraZ from Clostridium botulinum (strain Eklund 17B / Type B).